Here is a 412-residue protein sequence, read N- to C-terminus: Putative disintegrin and metalloproteinase domain-containing protein 5 (412 aa).

The Disintegrin domain maps to 111–199; it reads EKYADTNILL…YCLPDTYVRD (89 aa). Residues 351–385 form the EGF-like domain; it reads NLKLCDASNHCDRHGVCNNFNHCHCEKGYNPPYCQ.

In terms of assembly, interacts with TEX101. In terms of tissue distribution, highly expressed in testis.

Its function is as follows. This is a non catalytic metalloprotease-like protein. The chain is Putative disintegrin and metalloproteinase domain-containing protein 5 (ADAM5) from Homo sapiens (Human).